The following is a 502-amino-acid chain: MAPLKLNSRNLAQIFAAGKDRVKVPTYQRGSAVKEGIVHVGVGGFHRAHLAVYVDQLMQNHGVNDYAICGVGLQPFDAAMRDALRSQDHLYTVIERSAKGSFAHVVGSINSYLFAPDNREAVIAKMAHPDTHIVSLTITESGYYYNENTHELQAEHPDIQFDLDPANEKTPRTTFGFLYAALARRHQQGLRPFTVLSCDNMQKNGSITRHMLESFARLRNPELAKWIAEQGAFPNAMVDRITPQTSPTDKKALAETIGIEDSWPVVTEPFMQWVLEDQFSDGRPPFEKAGAQVVKNVHDVEQFEKHKLRLLNGSHSAIGYAGQMAGFEYVHEVMEHPLYNRFVWQMMQEEVKPLLPEIPGVDIDEYCKTLMERFSNPTIMDQLPRICLNASGKIPQFIMPSIAEAIWVTGPFRRLCFVAAAWFRYLNGIDDSGKTFNVDDPMREELQAKARAGGTNPAELLNVKSLFGDDLRSDKRFLQEITTAMEAIARDGIMKTMPKYVD.

NAD(+) is bound at residue 37-48 (IVHVGVGGFHRA).

It belongs to the mannitol dehydrogenase family. As to quaternary structure, monomer.

It carries out the reaction D-mannitol + NAD(+) = D-fructose + NADH + H(+). Functionally, catalyzes the NAD(H)-dependent interconversion of D-fructose and D-mannitol in the mannitol metabolic pathway. This chain is Mannitol 2-dehydrogenase, found in Aspergillus terreus (strain NIH 2624 / FGSC A1156).